Reading from the N-terminus, the 248-residue chain is MTLRTRFESSDDVGVFSRLTNAYCLVTAGGSQNFYSVFEQELANHIPVVYTSIGGSRVIGRLTCGNRHGLVVPSIATDQELQHLRNSLPDSVKVQRVEERLNALGNCVVCNDHVALIHTDLSRETEEILRDTLQVQTFRTSIAENALVGSYAVVNNKGCMVHPKTPAQDMDEIASLLQVPVVAGTINRGNAAIGSGLVVNDWAAFCGLNTTATEITVVERIFQLRRDLGGDEPNLLQQLRDTLVDELA.

This sequence belongs to the eIF-6 family. Monomer. Associates with the 60S ribosomal subunit.

The protein localises to the cytoplasm. The protein resides in the nucleus. It is found in the nucleolus. In terms of biological role, binds to the 60S ribosomal subunit and prevents its association with the 40S ribosomal subunit to form the 80S initiation complex in the cytoplasm. May also be involved in ribosome biogenesis. The polypeptide is Eukaryotic translation initiation factor 6 (Trypanosoma cruzi (strain CL Brener)).